The sequence spans 348 residues: NADH-ubiquinone oxidoreductase chain 2 (348 aa).

10 helical membrane passes run 3–23 (PFIL…TFAS), 24–44 (SHWL…IPLM), 60–80 (FITQ…NAWI), 95–115 (ASML…HFWL), 136–156 (LAPF…ITFL), 177–197 (ILAY…QFNQ), 198–218 (QLAL…FMIF), 239–259 (LTAI…LSGF), 273–293 (DIPL…YFYL), and 325–345 (LAIS…TLAL).

It belongs to the complex I subunit 2 family.

It is found in the mitochondrion inner membrane. It catalyses the reaction a ubiquinone + NADH + 5 H(+)(in) = a ubiquinol + NAD(+) + 4 H(+)(out). Its function is as follows. Core subunit of the mitochondrial membrane respiratory chain NADH dehydrogenase (Complex I) that is believed to belong to the minimal assembly required for catalysis. Complex I functions in the transfer of electrons from NADH to the respiratory chain. The immediate electron acceptor for the enzyme is believed to be ubiquinone. This is NADH-ubiquinone oxidoreductase chain 2 (MT-ND2) from Gadus morhua (Atlantic cod).